Consider the following 201-residue polypeptide: Small ribosomal subunit protein uS4 (201 aa).

The disordered stretch occupies residues 1 to 42; it reads MARYTGPATRKSRRLGVDLVGGDQSFEKRPYPPGQHGRARIK. Positions 91–157 constitute an S4 RNA-binding domain; it reads SRLDNVVYRA…LPFQIARETA (67 aa).

Belongs to the universal ribosomal protein uS4 family. In terms of assembly, part of the 30S ribosomal subunit. Contacts protein S5. The interaction surface between S4 and S5 is involved in control of translational fidelity.

Functionally, one of the primary rRNA binding proteins, it binds directly to 16S rRNA where it nucleates assembly of the body of the 30S subunit. Its function is as follows. With S5 and S12 plays an important role in translational accuracy. The chain is Small ribosomal subunit protein uS4 from Mycolicibacterium smegmatis (strain ATCC 700084 / mc(2)155) (Mycobacterium smegmatis).